The primary structure comprises 620 residues: Chaperone protein DnaK (620 aa).

Residue threonine 197 is modified to Phosphothreonine; by autocatalysis. The segment at 597 to 620 (AMANKNNAEQPKKKDDDVIDAEVE) is disordered.

This sequence belongs to the heat shock protein 70 family.

Functionally, acts as a chaperone. The chain is Chaperone protein DnaK from Helicobacter pylori (strain Shi470).